We begin with the raw amino-acid sequence, 61 residues long: MLNIFNLICICFNSALFSSTFLVAKLPEAYAFLNPIVDVMPVIPLFFLLLAFVWQAAVSFR.

The propeptide occupies 1–24 (MLNIFNLICICFNSALFSSTFLVA). A helical transmembrane segment spans residues 40–60 (MPVIPLFFLLLAFVWQAAVSF).

The protein belongs to the PsbK family. In terms of assembly, PSII is composed of 1 copy each of membrane proteins PsbA, PsbB, PsbC, PsbD, PsbE, PsbF, PsbH, PsbI, PsbJ, PsbK, PsbL, PsbM, PsbT, PsbX, PsbY, PsbZ, Psb30/Ycf12, at least 3 peripheral proteins of the oxygen-evolving complex and a large number of cofactors. It forms dimeric complexes.

Its subcellular location is the plastid. The protein resides in the chloroplast thylakoid membrane. Its function is as follows. One of the components of the core complex of photosystem II (PSII). PSII is a light-driven water:plastoquinone oxidoreductase that uses light energy to abstract electrons from H(2)O, generating O(2) and a proton gradient subsequently used for ATP formation. It consists of a core antenna complex that captures photons, and an electron transfer chain that converts photonic excitation into a charge separation. The sequence is that of Photosystem II reaction center protein K from Sinapis alba (White mustard).